Reading from the N-terminus, the 456-residue chain is Chordin-like protein 1 (456 aa).

Positions 1-28 (MRRKWRSEDFHFVFFGVLCLLLIDRGKL) are cleaved as a signal peptide. VWFC domains are found at residues 36–101 (TYCV…PRCP), 115–181 (KSCE…PVCR), and 262–327 (RVCV…KVCP). A glycan (N-linked (GlcNAc...) asparagine) is linked at asparagine 120. The Cell attachment site motif lies at 181–183 (RGD). The N-linked (GlcNAc...) asparagine glycan is linked to asparagine 295.

Mainly expressed in the ventral retina.

It localises to the secreted. Seems to antagonize the function of BMP4 by binding to it and preventing its interaction with receptors. The protein is Chordin-like protein 1 (CHRDL1) of Gallus gallus (Chicken).